The sequence spans 833 residues: Leucine--tRNA ligase (833 aa).

The 'HIGH' region signature appears at 41–52 (PYPSGAGLHVGH). The 'KMSKS' region motif lies at 610 to 614 (KMSKS). Position 613 (lysine 613) interacts with ATP.

This sequence belongs to the class-I aminoacyl-tRNA synthetase family.

It localises to the cytoplasm. The catalysed reaction is tRNA(Leu) + L-leucine + ATP = L-leucyl-tRNA(Leu) + AMP + diphosphate. The sequence is that of Leucine--tRNA ligase from Streptococcus gordonii (strain Challis / ATCC 35105 / BCRC 15272 / CH1 / DL1 / V288).